Here is a 425-residue protein sequence, read N- to C-terminus: Serine--tRNA ligase (425 aa).

230–232 is an L-serine binding site; it reads TAE. Residue 261–263 participates in ATP binding; it reads RSE. Glutamate 284 provides a ligand contact to L-serine. Position 348–351 (348–351) interacts with ATP; sequence EISS. Serine 384 contacts L-serine.

Belongs to the class-II aminoacyl-tRNA synthetase family. Type-1 seryl-tRNA synthetase subfamily. Homodimer. The tRNA molecule binds across the dimer.

Its subcellular location is the cytoplasm. It carries out the reaction tRNA(Ser) + L-serine + ATP = L-seryl-tRNA(Ser) + AMP + diphosphate + H(+). The enzyme catalyses tRNA(Sec) + L-serine + ATP = L-seryl-tRNA(Sec) + AMP + diphosphate + H(+). The protein operates within aminoacyl-tRNA biosynthesis; selenocysteinyl-tRNA(Sec) biosynthesis; L-seryl-tRNA(Sec) from L-serine and tRNA(Sec): step 1/1. Catalyzes the attachment of serine to tRNA(Ser). Is also able to aminoacylate tRNA(Sec) with serine, to form the misacylated tRNA L-seryl-tRNA(Sec), which will be further converted into selenocysteinyl-tRNA(Sec). This chain is Serine--tRNA ligase, found in Streptococcus sanguinis (strain SK36).